The following is a 439-amino-acid chain: 3beta-hydroxysteroid-dehydrogenase/decarboxylase isoform 1 (439 aa).

Residue 16–21 (GGRGFA) coordinates NAD(+). Asn75 and Asn158 each carry an N-linked (GlcNAc...) asparagine glycan. 2 residues coordinate NAD(+): Tyr161 and Lys165. Catalysis depends on Lys165, which acts as the Proton donor. Residue Asn327 is glycosylated (N-linked (GlcNAc...) asparagine). Residues 371-439 (VTETIQWKKQ…MKVFGSKKID (69 aa)) form the Reticulon; atypical domain. 2 helical membrane passes run 381-401 (TLIA…TTGS) and 405-425 (IITA…INGI).

Belongs to the 3-beta-HSD family.

It is found in the endoplasmic reticulum membrane. It carries out the reaction a 3beta-hydroxysteroid-4alpha-carboxylate + NAD(+) = a 3-oxosteroid + CO2 + NADH. It catalyses the reaction 4alpha-carboxy-4beta,14alpha-dimethyl-9beta,19-cyclo-5alpha-ergost-24(24(1))-en-3beta-ol + NAD(+) = cycloeucalenone + CO2 + NADH. The protein operates within steroid biosynthesis; zymosterol biosynthesis; zymosterol from lanosterol: step 4/6. In terms of biological role, 3beta-hydroxysteroid-dehydrogenase/decarboxylase involved in sterol synthesis. Catalyzes the formation of 3-oxosteroids from 3beta-hydroxysteroids-4alpha-carboxylate. Involved in the regulation of inflorescence internodes and leaves growth, probably by affecting auxin transporter activity possibly by altering sterol composition in the membranes. In Arabidopsis thaliana (Mouse-ear cress), this protein is 3beta-hydroxysteroid-dehydrogenase/decarboxylase isoform 1.